Reading from the N-terminus, the 143-residue chain is Nucleoside diphosphate kinase (143 aa).

Residues Lys11, Phe59, Arg87, Thr93, Arg104, and Asn114 each coordinate ATP. His117 serves as the catalytic Pros-phosphohistidine intermediate.

This sequence belongs to the NDK family. In terms of assembly, homotetramer. Mg(2+) serves as cofactor.

The protein localises to the cytoplasm. It catalyses the reaction a 2'-deoxyribonucleoside 5'-diphosphate + ATP = a 2'-deoxyribonucleoside 5'-triphosphate + ADP. It carries out the reaction a ribonucleoside 5'-diphosphate + ATP = a ribonucleoside 5'-triphosphate + ADP. Functionally, major role in the synthesis of nucleoside triphosphates other than ATP. The ATP gamma phosphate is transferred to the NDP beta phosphate via a ping-pong mechanism, using a phosphorylated active-site intermediate. This chain is Nucleoside diphosphate kinase, found in Pseudoalteromonas atlantica (strain T6c / ATCC BAA-1087).